A 347-amino-acid chain; its full sequence is Tetraacyldisaccharide 4'-kinase (347 aa).

54 to 61 (TVGGAGKT) contacts ATP.

This sequence belongs to the LpxK family.

It carries out the reaction a lipid A disaccharide + ATP = a lipid IVA + ADP + H(+). It participates in glycolipid biosynthesis; lipid IV(A) biosynthesis; lipid IV(A) from (3R)-3-hydroxytetradecanoyl-[acyl-carrier-protein] and UDP-N-acetyl-alpha-D-glucosamine: step 6/6. Its function is as follows. Transfers the gamma-phosphate of ATP to the 4'-position of a tetraacyldisaccharide 1-phosphate intermediate (termed DS-1-P) to form tetraacyldisaccharide 1,4'-bis-phosphate (lipid IVA). This chain is Tetraacyldisaccharide 4'-kinase, found in Rhizobium etli (strain CIAT 652).